The sequence spans 157 residues: MFDVLMYLFESYIHNETEMRVDQDTLTDDLTRAGFDRNDIYSALSWLEKLADIQEGQTAPLYLANDPLAMRIYTQDETLRLDAECRGFLLFLEQIQVLNLETREMVIERVMALETQEFDLEDLKWVILMVLFNVPGCENAYQQMEELLFEVNDGYVQ.

Belongs to the Smg family.

This chain is Protein Smg, found in Pectobacterium carotovorum subsp. carotovorum (strain PC1).